The primary structure comprises 336 residues: Alpha-glucoside transport system permease protein AglF (336 aa).

A run of 8 helical transmembrane segments spans residues 4–24 (LIAAILTMVAGVLVCAAYFWS), 55–75 (PWLFLAPALLALTLYLVYPVV), 113–133 (FLWLLVVPALSTFFGLIIAAL), 146–166 (LIFMPMAISFVGAAVIWKFIY), 176–196 (IGLLNAIVVALGGEPQAWITL), 202–222 (FFLMVILIWIQTGFAMVILSA), 258–278 (IAVVWTTITILVLKVFDIVLA), and 304–324 (FGRGAAIAVVIMILVVPIMIW). Residues 109 to 325 (IFNNFLWLLV…ILVVPIMIWN (217 aa)) enclose the ABC transmembrane type-1 domain.

This sequence belongs to the binding-protein-dependent transport system permease family. MalFG subfamily.

The protein resides in the cell inner membrane. Functionally, part of the binding-protein-dependent transport system for alpha-glucosides such as sucrose, maltose and trehalose. Probably responsible for the translocation of the substrate across the membrane. This is Alpha-glucoside transport system permease protein AglF (aglF) from Rhizobium meliloti (strain 1021) (Ensifer meliloti).